Here is a 541-residue protein sequence, read N- to C-terminus: Probable malate:quinone oxidoreductase (541 aa).

Residues 520 to 541 form a disordered region; it reads AKPAAGAAQQAKPAKATADIAL.

Belongs to the MQO family. The cofactor is FAD.

The catalysed reaction is (S)-malate + a quinone = a quinol + oxaloacetate. It functions in the pathway carbohydrate metabolism; tricarboxylic acid cycle; oxaloacetate from (S)-malate (quinone route): step 1/1. The polypeptide is Probable malate:quinone oxidoreductase (Ralstonia nicotianae (strain ATCC BAA-1114 / GMI1000) (Ralstonia solanacearum)).